The sequence spans 129 residues: Large ribosomal subunit protein bL17 (129 aa).

The protein belongs to the bacterial ribosomal protein bL17 family. As to quaternary structure, part of the 50S ribosomal subunit. Contacts protein L32.

The sequence is that of Large ribosomal subunit protein bL17 from Thiobacillus denitrificans (strain ATCC 25259 / T1).